A 343-amino-acid chain; its full sequence is Glutamine synthetase (343 aa).

In terms of domain architecture, GS beta-grasp spans 3–87; it reads FKAEYIWIDG…CEVLNIDLTP (85 aa). Residues 92-343 enclose the GS catalytic domain; the sequence is TRAALAEVAE…CSALEKAGQV (252 aa). Glu-113, Glu-115, Glu-174, and Glu-181 together coordinate Mg(2+). Glu-279 serves as a coordination point for L-glutamate.

The protein belongs to the glutamine synthetase family. As to quaternary structure, homooctamer and homotetramer. The cofactor is Mg(2+).

The protein resides in the cytoplasm. It carries out the reaction L-glutamate + NH4(+) + ATP = L-glutamine + ADP + phosphate + H(+). In terms of biological role, catalyzes the ATP-dependent biosynthesis of glutamine from glutamate and ammonia. The sequence is that of Glutamine synthetase from Streptomyces viridochromogenes.